We begin with the raw amino-acid sequence, 55 residues long: uncharacterized protein (55 aa).

This is an uncharacterized protein from Acidianus hospitalis (AFV-1).